A 380-amino-acid chain; its full sequence is MISPTNLLPARKITPVSNGGAATASPSSPSVAARPRRLPSGLQSVTGRGKVSLAAITLDDYLPMRSTEVKNRTSTDDITRLRLITAVKTPYLPDGRFDLEAYDSLINMQIEGGAEGVIVGGTTGEGHLMSWDEHIMLIGHTVNCFGSRIKVIGNTGSNSTREAVHATEQGFAVGMHAALHINPYYGKTSAEGMISHFEAVLPMGPTIIYNVPSRSAQDIPPEVILAISGYTNMAGVKECVGHERVKHYADKGITIWSGNDDECHDSKWKHGATGVISVTSNLVPGLMHSLMYKGENATLNEKLSPLMKWLFCQPNPIALNTALAQLGVARPVFRLPYVPLPLEKRAEFVRIVESIGRENFVGQKEARVLDDDDFVLISRY.

A disordered region spans residues 1–44 (MISPTNLLPARKITPVSNGGAATASPSSPSVAARPRRLPSGLQS). Residues 1-54 (MISPTNLLPARKITPVSNGGAATASPSSPSVAARPRRLPSGLQSVTGRGKVSLA) constitute a chloroplast transit peptide. Positions 21-33 (AATASPSSPSVAA) are enriched in low complexity. Pyruvate is bound at residue Thr-123. The Proton donor/acceptor role is filled by Tyr-209. Catalysis depends on Lys-237, which acts as the Schiff-base intermediate with substrate. Ile-276 lines the pyruvate pocket.

Belongs to the DapA family. In terms of assembly, tetramer of modified subunits derived from two genes in different combinations.

The protein resides in the plastid. It is found in the chloroplast. It carries out the reaction L-aspartate 4-semialdehyde + pyruvate = (2S,4S)-4-hydroxy-2,3,4,5-tetrahydrodipicolinate + H2O + H(+). The protein operates within amino-acid biosynthesis; L-lysine biosynthesis via DAP pathway; (S)-tetrahydrodipicolinate from L-aspartate: step 3/4. Sensitive to lysine inhibition. This inhibition increase in an allosteric manner with increasing concentration of the inhibitor. Its function is as follows. Catalyzes the condensation of (S)-aspartate-beta-semialdehyde [(S)-ASA] and pyruvate to 4-hydroxy-tetrahydrodipicolinate (HTPA). The protein is 4-hydroxy-tetrahydrodipicolinate synthase, chloroplastic of Zea mays (Maize).